The sequence spans 1057 residues: MVRKKVDTRIRTLIENGVATNHRSFFVIVGDNGKDQVPNLHYILSKSIVKARPSVLWCYKEDLGFSKHKKKKMKLKEKSKSSGIDSVNQEDPFDVFISTTNIRYSYYSESHKILGNTFGMLVLQDFEAITPNLLARTIETVEGGGLIVLLLKTMDSLKQLYTMTMDVHTRFRSENSKGEVVCRFNERFLLSLGKSEQCLVMDDELNILPISSQSRSIEAKQQILETPEQVELREFKQQVKDTDIAGALIENTKTMDQATALLTFIDSISEKTLRSTVTLTAGRGRGKSAALGLAISAAVAFGYSNIFVSSPTPENLNTLFQFVFKGFDSMEYVEHVDYELVKSTNPEFHDAIIRVNIFRSHRQTIQYIQPQDYQKLGQAELVVIDEAAAIPLPLVKNLLGPYLVFMSSTINGYEGTGRSLSLKLIKQLREQSTVVSNSSNKALNSITGRMLREIELNEPIRYSARDPIERWLNELLCLDSTIAKSSPTGCPHPSACQLYYVNRDTLFSYHKASEAFLQKMVGLFVSSHYKNSPNDLLLMSDAPDHHLFVLLGPIDENNTTGLPEILCAVQVSLEGEIAKESILNSIKRGYQASGDLIPWTLTQQYQDEDFPRLSGVRIVRIATHPDYQKMGYGSKALELLTQYYQGEITNLDEVNQEEEEEDEEKVDQNKGSSKISTVKKDNASLLTEVIRPKSNIPPLLFKLSERKPEKLHYMGVSYGLTQQLYQFWSKSKYLPVYLRLTSNDITGEHTCIMLRELNNEQNNTICKDGWLQSFHQDFKKRFINLLGYEFRNFNSSIALNILYEKKVNNTVAVASSTTKNELTQNEMELLFSSYDLKRLESYSNNIVDYHVVIDLLPSLSKLYFTNKLKIEDISLIQSAILLALGLQHKTVDNLIGELNLASNQVLSLFNQTMRKINTELKQKQEKFIQDSMPKLSIVAPRTGQFKSFKGDIKETDMIPLAEDMESELEKGAEEVVNKLKHQLENDSSLSKYLVKGNDEDWSKALKPGSIPNSITIKRKSDENEETDKKENNKKSKTKNNNNNNNNNKKVNNQKSKK.

ATP-binding positions include 284–293 (GRGKSAALGL) and Arg461. The N-acetyltransferase domain occupies 549 to 682 (VLLGPIDENN…SKISTVKKDN (134 aa)). Acetyl-CoA contacts are provided by residues 621-623 (IAT) and 628-634 (QKMGYGS). Over residues 654–665 (VNQEEEEEDEEK) the composition is skewed to acidic residues. Residues 654 to 675 (VNQEEEEEDEEKVDQNKGSSKI) are disordered. Lys730 provides a ligand contact to acetyl-CoA. The interval 1001-1057 (WSKALKPGSIPNSITIKRKSDENEETDKKENNKKSKTKNNNNNNNNNKKVNNQKSKK) is disordered. Basic and acidic residues predominate over residues 1018-1033 (RKSDENEETDKKENNK). Over residues 1038 to 1057 (KNNNNNNNNNKKVNNQKSKK) the composition is skewed to low complexity.

The protein belongs to the RNA cytidine acetyltransferase family. NAT10 subfamily. In terms of assembly, part of the small subunit (SSU) processome, composed of more than 70 proteins and the RNA chaperone small nucleolar RNA (snoRNA) U3.

It localises to the nucleus. The protein resides in the nucleolus. The enzyme catalyses a cytidine in 18S rRNA + acetyl-CoA + ATP + H2O = an N(4)-acetylcytidine in 18S rRNA + ADP + phosphate + CoA + H(+). The catalysed reaction is a cytidine in tRNA + acetyl-CoA + ATP + H2O = an N(4)-acetylcytidine in tRNA + ADP + phosphate + CoA + H(+). In terms of biological role, RNA cytidine acetyltransferase with specificity toward both 18S rRNA and tRNAs. Catalyzes the formation of N(4)-acetylcytidine (ac4C) in 18S rRNA. Required for early nucleolar cleavages of precursor rRNA at sites A0, A1 and A2 during 18S rRNA synthesis. Catalyzes the formation of ac4C in serine and leucine tRNAs. Requires a tRNA-binding adapter protein for full tRNA acetyltransferase activity but not for 18S rRNA acetylation. Part of the small subunit (SSU) processome, first precursor of the small eukaryotic ribosomal subunit. During the assembly of the SSU processome in the nucleolus, many ribosome biogenesis factors, an RNA chaperone and ribosomal proteins associate with the nascent pre-rRNA and work in concert to generate RNA folding, modifications, rearrangements and cleavage as well as targeted degradation of pre-ribosomal RNA by the RNA exosome. The polypeptide is RNA cytidine acetyltransferase (nat10) (Dictyostelium discoideum (Social amoeba)).